We begin with the raw amino-acid sequence, 1363 residues long: Clustered mitochondria protein homolog (1363 aa).

TPR repeat units lie at residues 29–63 (LPSF…IVLC) and 120–154 (KEKS…DIGS). The segment at 172 to 191 (KEAKKEESTEKEQQEKEELS) is disordered. The stretch at 283–316 (STINFNPTIKINEKGKFNKSYLLYDLVCQLSPLF) is one TPR 3 repeat. A Clu domain is found at 361 to 631 (DLSRSQLSSL…RTTPRDIEFI (271 aa)). Residues 521-544 (PVITSPTTDAEGKNEAEEPESEPV) are disordered. One copy of the TPR 4 repeat lies at 548-581 (VYGLSSDGSRILEDKSFEEPLKQIGDFFHLKPHK). Positions 799–832 (AKAEKKREEEKEKEEKEATESEDKKEKKEDKEDA) are enriched in basic and acidic residues. Positions 799-844 (AKAEKKREEEKEKEEKEATESEDKKEKKEDKEDAEKEEAEAEEEVP) are disordered. Over residues 833–842 (EKEEAEAEEE) the composition is skewed to acidic residues. TPR repeat units follow at residues 1057–1090 (VEEI…NESI), 1141–1174 (ITAY…WSLV), 1183–1216 (INTL…TKKL), and 1225–1258 (GFIY…FMKL). Positions 1291 to 1363 (QQETQKKSKT…SGSKKSNKKK (73 aa)) are disordered. The span at 1330–1342 (PPQSNPEIANQSI) shows a compositional bias: polar residues.

The protein belongs to the CLU family. In terms of assembly, may associate with the eukaryotic translation initiation factor 3 (eIF-3) complex.

Its subcellular location is the cytoplasm. MRNA-binding protein involved in proper cytoplasmic distribution of mitochondria. This chain is Clustered mitochondria protein homolog, found in Candida albicans (strain SC5314 / ATCC MYA-2876) (Yeast).